A 202-amino-acid polypeptide reads, in one-letter code: 3-isopropylmalate dehydratase small subunit (202 aa).

This sequence belongs to the LeuD family. LeuD type 1 subfamily. Heterodimer of LeuC and LeuD.

It catalyses the reaction (2R,3S)-3-isopropylmalate = (2S)-2-isopropylmalate. It participates in amino-acid biosynthesis; L-leucine biosynthesis; L-leucine from 3-methyl-2-oxobutanoate: step 2/4. Catalyzes the isomerization between 2-isopropylmalate and 3-isopropylmalate, via the formation of 2-isopropylmaleate. The protein is 3-isopropylmalate dehydratase small subunit of Nocardioides sp. (strain ATCC BAA-499 / JS614).